The following is a 447-amino-acid chain: GTPase Der (447 aa).

2 consecutive EngA-type G domains span residues 3-167 (PVIA…HLAD) and 180-353 (IRLA…ASAN). Residues 9–16 (GRPNVGKS), 56–60 (DTGGF), 119–122 (NKAE), 186–193 (GRPNVGKS), 233–237 (DTAGL), and 298–301 (NKWD) contribute to the GTP site. The KH-like domain occupies 354–438 (RKMSTPVLTR…PMRIQMKSSH (85 aa)).

It belongs to the TRAFAC class TrmE-Era-EngA-EngB-Septin-like GTPase superfamily. EngA (Der) GTPase family. In terms of assembly, associates with the 50S ribosomal subunit.

GTPase that plays an essential role in the late steps of ribosome biogenesis. The polypeptide is GTPase Der (Polaromonas sp. (strain JS666 / ATCC BAA-500)).